A 535-amino-acid polypeptide reads, in one-letter code: Zinc transporter ZIP5 (535 aa).

The N-terminal stretch at 1-19 (MGPPVHHLLTGLCVGVALG) is a signal peptide. The Extracellular portion of the chain corresponds to 20–210 (WVGGSVPNLG…PAPPGDVLSA (191 aa)). 2 N-linked (GlcNAc...) asparagine glycosylation sites follow: N49 and N158. The chain crosses the membrane as a helical span at residues 211–231 (LLHSGLAVLFLSLPAPLSLLL). Residues 232-242 (LRLLGPRLLRP) are Cytoplasmic-facing. A helical transmembrane segment spans residues 243–263 (VLGFLGALAVGTLCGDALLHL). Residues 264–285 (LPHAQGGRHTGPSEQSEEDLGP) lie on the Extracellular side of the membrane. The chain crosses the membrane as a helical span at residues 286 to 306 (GLSVLGGLFLLFMLENTLGLV). The Cytoplasmic segment spans residues 307–439 (RHRGLRPRCC…LLQEGLSFRK (133 aa)). The tract at residues 316–373 (CRNKRDLGEPNPDPEDGSGMVLRPLQAASEPEVQGQRENRQSSPSLAPPGHQGHSHEH) is disordered. S333 is subject to Phosphoserine. H371 is subject to Pros-methylhistidine. A helical transmembrane segment spans residues 440–460 (LLLLSLVSGALGLGGAALGVG). Residues 461–465 (LSLGP) are Extracellular-facing. The chain crosses the membrane as a helical span at residues 466–486 (VPLTPWVFGTTAGVFLYVALV). Residues 487-503 (DMLPTLLRPPEPLPVFH) lie on the Cytoplasmic side of the membrane. A helical transmembrane segment spans residues 504–524 (VLLQGLGLLLGGSLMFTIALL). The Extracellular segment spans residues 525–535 (EEQLVPTVPDG).

It belongs to the ZIP transporter (TC 2.A.5) family. Homodimer. In terms of processing, N-Glycosylated. Post-translationally, methylated at His-371 by METTL9. Expressed in all stages of eye development and primarily in the sclera and several layers of the retina, including the inner segment, outer plexiform layer and ganglion cell layer. Expressed in pancreas, kidney and the proximal and distal small intestine as well as in the embryonic visceral yolk sac. In the proximal intestine, expression is predominant in the crypts but diminishes toward the apical regions of the villi.

Its subcellular location is the basolateral cell membrane. It catalyses the reaction Zn(2+)(in) = Zn(2+)(out). Functionally, uniporter that transports zinc(2+) into polarized cells of enterocytes, pancreatic acinar and endoderm cells across the basolateral membrane and participates, notably, in zinc excretion from the intestine by the uptake of zinc from the blood into the intestine. The transport mechanism is temperature- and concentration-dependent and saturable. In addition, is also a high affinity copper transporter in vitro. Also may regulate glucose-stimulated insulin secretion (GSIS) in islets primarily through the zinc-activated SIRT1-PPARGC1A axis. Could regulate the BMP/TGF-beta (bone morphogenetic protein/transforming growth factor-beta) signaling pathway and modulates extracellular matrix (ECM) proteins of the sclera. Plays a role in eye development. The protein is Zinc transporter ZIP5 of Mus musculus (Mouse).